Consider the following 96-residue polypeptide: MPAIEIGRICVKVAGREAGRKCVIVDIIDENFVLITGPKSLTGVKRRRANVKHIEPLDKVIDISRGASDEEVLRAIANAGLTEFMKEIVKPKLVPV.

Belongs to the eukaryotic ribosomal protein eL14 family.

The sequence is that of Large ribosomal subunit protein eL14 from Staphylothermus marinus (strain ATCC 43588 / DSM 3639 / JCM 9404 / F1).